The sequence spans 367 residues: Uroporphyrinogen decarboxylase (367 aa).

Residues 28–32, Asp78, Tyr158, Thr213, and His334 each bind substrate; that span reads RQAGR.

Belongs to the uroporphyrinogen decarboxylase family. Homodimer.

It localises to the cytoplasm. It carries out the reaction uroporphyrinogen III + 4 H(+) = coproporphyrinogen III + 4 CO2. Its pathway is porphyrin-containing compound metabolism; protoporphyrin-IX biosynthesis; coproporphyrinogen-III from 5-aminolevulinate: step 4/4. Functionally, catalyzes the decarboxylation of four acetate groups of uroporphyrinogen-III to yield coproporphyrinogen-III. The chain is Uroporphyrinogen decarboxylase from Ralstonia pickettii (strain 12J).